Consider the following 225-residue polypeptide: Platelet-activating factor acetylhydrolase IB subunit beta homolog (225 aa).

Belongs to the 'GDSL' lipolytic enzyme family. Platelet-activating factor acetylhydrolase IB beta/gamma subunits subfamily. Does not interact with Lis-1.

The polypeptide is Platelet-activating factor acetylhydrolase IB subunit beta homolog (Paf-AHalpha) (Drosophila melanogaster (Fruit fly)).